A 223-amino-acid polypeptide reads, in one-letter code: Deoxyribose-phosphate aldolase (223 aa).

Residue Asp91 is the Proton donor/acceptor of the active site. The Schiff-base intermediate with acetaldehyde role is filled by Lys154. Lys183 acts as the Proton donor/acceptor in catalysis.

It belongs to the DeoC/FbaB aldolase family. DeoC type 1 subfamily.

It is found in the cytoplasm. It catalyses the reaction 2-deoxy-D-ribose 5-phosphate = D-glyceraldehyde 3-phosphate + acetaldehyde. The protein operates within carbohydrate degradation; 2-deoxy-D-ribose 1-phosphate degradation; D-glyceraldehyde 3-phosphate and acetaldehyde from 2-deoxy-alpha-D-ribose 1-phosphate: step 2/2. Its function is as follows. Catalyzes a reversible aldol reaction between acetaldehyde and D-glyceraldehyde 3-phosphate to generate 2-deoxy-D-ribose 5-phosphate. The polypeptide is Deoxyribose-phosphate aldolase (Geobacillus kaustophilus (strain HTA426)).